We begin with the raw amino-acid sequence, 204 residues long: Ribosomal RNA large subunit methyltransferase E (204 aa).

Residues Gly49, Trp51, Asp69, Asn87, and Asp111 each coordinate S-adenosyl-L-methionine. Lys151 acts as the Proton acceptor in catalysis.

The protein belongs to the class I-like SAM-binding methyltransferase superfamily. RNA methyltransferase RlmE family.

The protein localises to the cytoplasm. It carries out the reaction uridine(2552) in 23S rRNA + S-adenosyl-L-methionine = 2'-O-methyluridine(2552) in 23S rRNA + S-adenosyl-L-homocysteine + H(+). Its function is as follows. Specifically methylates the uridine in position 2552 of 23S rRNA at the 2'-O position of the ribose in the fully assembled 50S ribosomal subunit. This is Ribosomal RNA large subunit methyltransferase E from Nitratidesulfovibrio vulgaris (strain ATCC 29579 / DSM 644 / CCUG 34227 / NCIMB 8303 / VKM B-1760 / Hildenborough) (Desulfovibrio vulgaris).